A 71-amino-acid polypeptide reads, in one-letter code: MKTQFAILLVALVLFQMFAQSEAIFGAIWNGIKSLFGRRALNNDLDLDGLDELFDGEISQADVDFLKELMR.

The N-terminal stretch at 1 to 23 (MKTQFAILLVALVLFQMFAQSEA) is a signal peptide. Phe-36 bears the Phenylalanine amide mark. Residues 40-71 (ALNNDLDLDGLDELFDGEISQADVDFLKELMR) constitute a propeptide that is removed on maturation.

Belongs to the non-disulfide-bridged peptide (NDBP) superfamily. Short antimicrobial peptide (group 4) family. Post-translationally, isCT2F is an enzymatic proteolytic cleavage product of IsCT2 by the proteases present in the venom. In terms of tissue distribution, expressed by the venom gland.

The protein resides in the secreted. It is found in the target cell membrane. Its function is as follows. IsCT2 shows weak hemolytic activity and antibacterial activity against both Gram-positive and Gram-negative bacteria probably by forming pores in the cell membrane. IsCT2 adopts an amphipathic alpha-helical structure. IsCT2f shows neither hemolytic, nor antibacterial activities, surely due to the fact that it cannot apply amphipathic alpha-helical structure. The chain is Cytotoxic linear peptide IsCT2 from Opisthacanthus madagascariensis (Scorpion).